The chain runs to 439 residues: Skin secretory protein xP2 (439 aa).

A signal peptide spans 1 to 22 (MNHKLFCVHFLLLILSVCYIQG). Residues 25-351 (AGGEPAPAEG…VEVGPKTEDC (327 aa)) form a disordered region. 5 repeat units span residues 26–33 (GGEPAPAE), 34–41 (GVAPAPAE), 42–51 (GGAPAPAPAE), 52–59 (GEAPAPAE), and 60–69 (GGAPAPAPAE). The tract at residues 26–343 (GGEPAPAEGV…APAPAPAPVE (318 aa)) is 33 X approximate repeats of G-G(0,1)-[EV](0,1)-A-P-[A-P](1,3)-A-E. Positions 26–345 (GGEPAPAEGV…APAPAPVEVG (320 aa)) are enriched in low complexity. The stretch at 70–77 (GAEPAPAD) is one 6; approximate repeat. 9 repeat units span residues 78–87 (GGAPAPAPAE), 88–97 (GGAPAPAPAE), 98–107 (GGAPAPAPAE), 108–115 (GGAPAPAE), 116–125 (GGAPAPAPAE), 126–135 (GEAPAPAPAE), 136–145 (GEAPAPAPAE), 146–153 (GEAPAPAE), and 154–163 (GEAPAPAPAE). The 16; approximate repeat unit spans residues 164–173 (VEAPAPAPAE). A run of 14 repeats spans residues 174 to 183 (GEAPAPAPAE), 184 to 193 (GEAPAPAPAE), 194 to 203 (GEAPAPAPAE), 204 to 215 (GEAPAPAPAPAE), 216 to 225 (GEAPAPAPAE), 226 to 235 (GEAPAPAPAE), 236 to 245 (GEAPAPAPAE), 246 to 255 (GEAPAPAPAE), 256 to 265 (GEAPAPAPAE), 266 to 275 (GEAPAPAPAE), 276 to 285 (GEAPAPAPAE), 286 to 293 (GEAPAPAE), 294 to 303 (GEAPAPAPAE), and 304 to 313 (GEAPAPAPAE). The 31; approximate repeat unit spans residues 314–321 (GGAPSPAE). The stretch at 322–331 (GGAPAAAPAE) is one 32; approximate repeat. The stretch at 332-343 (GGAPAPAPAPVE) is one 33; approximate repeat. P-type domains follow at residues 349-392 (EDCK…FFPR) and 396-439 (AQCL…FHQK). 6 disulfide bridges follow: cysteine 351-cysteine 377, cysteine 361-cysteine 376, cysteine 371-cysteine 388, cysteine 398-cysteine 424, cysteine 408-cysteine 423, and cysteine 418-cysteine 435.

Skin.

It is found in the secreted. Its function is as follows. May act as a growth factor in the germinal layer of the epidermis. May also be involved in growth of regenerating glands and in protection of the skin from the external environment. In Xenopus laevis (African clawed frog), this protein is Skin secretory protein xP2 (p2).